The following is a 322-amino-acid chain: RNA pseudouridine synthase 1 (322 aa).

Asp-120 is a catalytic residue.

This sequence belongs to the pseudouridine synthase RluA family.

The catalysed reaction is a uridine in RNA = a pseudouridine in RNA. The chain is RNA pseudouridine synthase 1 from Arabidopsis thaliana (Mouse-ear cress).